The primary structure comprises 148 residues: uncharacterized protein (148 aa).

Residues 97–112 (KKLDEQRMPGKPKNTE) show a composition bias toward basic and acidic residues. The tract at residues 97–126 (KKLDEQRMPGKPKNTEGSKSTIRKKANVGN) is disordered.

This is an uncharacterized protein from Caenorhabditis elegans.